The primary structure comprises 279 residues: Elongation factor Ts (279 aa).

The involved in Mg(2+) ion dislocation from EF-Tu stretch occupies residues 80-83; it reads TDFV.

The protein belongs to the EF-Ts family.

It localises to the cytoplasm. Its function is as follows. Associates with the EF-Tu.GDP complex and induces the exchange of GDP to GTP. It remains bound to the aminoacyl-tRNA.EF-Tu.GTP complex up to the GTP hydrolysis stage on the ribosome. This Borreliella burgdorferi (strain ZS7) (Borrelia burgdorferi) protein is Elongation factor Ts.